The primary structure comprises 173 residues: Ribosome maturation factor RimM (173 aa).

The 75-residue stretch at S94–L168 folds into the PRC barrel domain.

It belongs to the RimM family. As to quaternary structure, binds ribosomal protein uS19.

The protein resides in the cytoplasm. An accessory protein needed during the final step in the assembly of 30S ribosomal subunit, possibly for assembly of the head region. Essential for efficient processing of 16S rRNA. May be needed both before and after RbfA during the maturation of 16S rRNA. It has affinity for free ribosomal 30S subunits but not for 70S ribosomes. The protein is Ribosome maturation factor RimM of Lawsonia intracellularis (strain PHE/MN1-00).